The following is a 383-amino-acid chain: Non-structural maintenance of chromosomes element 4 homolog B (383 aa).

Over residues 1-22 (MRNSVKWETELTGDRSRRREAD) the composition is skewed to basic and acidic residues. Disordered stretches follow at residues 1–59 (MRNS…EQGI), 198–231 (MKQR…EKKS), and 355–383 (QGSV…NGGL). The span at 201–212 (RKSRVGNRKRTK) shows a compositional bias: basic residues. Residues 355-372 (QGSVIQEETVVEDSSNME) are compositionally biased toward polar residues.

The protein belongs to the NSE4 family. As to quaternary structure, interacts with SMC5, SMC6A or SMC6B. The SMC5-SMC6 complex is composed of the SMC5 and SMC6 heterodimer attached via their hinge domain and from the non-SMC subunit NSE4A or NSE4B. As to expression, not expressed in seedlings, rosette leaves and floral buds.

It is found in the nucleus. Component of the SMC5-SMC6 complex, that promotes sister chromatid alignment after DNA damage and facilitates double-stranded DNA breaks (DSBs) repair via homologous recombination between sister chromatids. The polypeptide is Non-structural maintenance of chromosomes element 4 homolog B (NSE4B) (Arabidopsis thaliana (Mouse-ear cress)).